The chain runs to 989 residues: Cation-chloride cotransporter 1 (989 aa).

The span at 1–10 (MENGEIEGAA) shows a compositional bias: acidic residues. A disordered region spans residues 1 to 29 (MENGEIEGAADDGVPVPAPPNGRRYRPVG). The Cytoplasmic portion of the chain corresponds to 1 to 132 (MENGEIEGAA…GRPKETGPKF (132 aa)). A helical transmembrane segment spans residues 133–153 (GTMMGVFVPCLQNILGIIYYI). Over 154–167 (RFTWIVGMAGVWQS) the chain is Extracellular. A helical transmembrane segment spans residues 168–188 (LVLVSFCGACTFLTGISLSAI). The Cytoplasmic portion of the chain corresponds to 189-214 (ATNGAMKGGGPYYLIGRALGPEVGVS). Residues 215–235 (IGLCFFLGNAVAGSMYVLGAV) form a helical membrane-spanning segment. At 236 to 280 (ETFLDAVPSAGFFKESVTVVNNTLVNGTATASTATISTPSLHDLQ) the chain is on the extracellular side. N-linked (GlcNAc...) asparagine glycosylation is found at asparagine 256 and asparagine 261. Residues 281–301 (VYGVIVTILLCFIVFGGVKII) traverse the membrane as a helical segment. Residues 302–304 (NKV) are Cytoplasmic-facing. A helical membrane pass occupies residues 305–325 (APAFLIPVLFSLLCIYLGVFI). Topologically, residues 326-365 (APRHNAPKGITGLSITTFKDNWGSEYQRTNNAGVPDPNGS) are extracellular. Asparagine 363 is a glycosylation site (N-linked (GlcNAc...) asparagine). Residues 366 to 386 (IYWDFNALVGLFFPAVTGIMA) traverse the membrane as a helical segment. The Cytoplasmic portion of the chain corresponds to 387–405 (GSNRSASLKDTQRSIPIGT). Residues 406–426 (LSATLTTTAMYLFSVLLFGAL) traverse the membrane as a helical segment. Topologically, residues 427–441 (ATREELLTDRLLTAT) are extracellular. Residues 442–462 (VAWPAPAVIYIGIILSTLGAA) form a helical membrane-spanning segment. At 463-498 (LQSLTGAPRLLAAIANDDILPVLNYFKVSEGAEPHS) the chain is on the cytoplasmic side. A helical membrane pass occupies residues 499–519 (ATLFTAFICICCVVIGNLDLI). Topologically, residues 520–522 (TPT) are extracellular. Residues 523-543 (ITMFFLLCYAGVNLSCFLLDL) form a helical membrane-spanning segment. The Cytoplasmic segment spans residues 544 to 551 (LDAPSWRP). A helical transmembrane segment spans residues 552–572 (RWKFHHWSLSLVGALLCVVIM). The Extracellular segment spans residues 573–578 (FLISWS). Residues 579–599 (FTVVSLALASLIYYYVSLKGK) traverse the membrane as a helical segment. Residues 600–989 (AGDWGDGFKS…YRRDVVTFFT (390 aa)) are Cytoplasmic-facing.

Belongs to the SLC12A transporter family. As to expression, expressed in roots, stems and leaves with higher expression in root and leaf tips.

It localises to the membrane. Its function is as follows. Probable cation/chloride cotransporter that may mediate potassium-chloride cotransport. Involved in plant development and K(+) and Cl(-) homeostasis. May not be involved in sodium-chloride cotransport. This is Cation-chloride cotransporter 1 (CCC1) from Oryza sativa subsp. japonica (Rice).